Here is a 444-residue protein sequence, read N- to C-terminus: Trigger factor (444 aa).

Residues 160–245 enclose the PPIase FKBP-type domain; sequence DMQVTFDFEG…VKQVEKPKLP (86 aa).

This sequence belongs to the FKBP-type PPIase family. Tig subfamily.

It is found in the cytoplasm. It catalyses the reaction [protein]-peptidylproline (omega=180) = [protein]-peptidylproline (omega=0). In terms of biological role, involved in protein export. Acts as a chaperone by maintaining the newly synthesized protein in an open conformation. Functions as a peptidyl-prolyl cis-trans isomerase. In Acinetobacter baumannii (strain SDF), this protein is Trigger factor.